The sequence spans 562 residues: MTRNARPNIVLLMADDLGVGDLCCYGNNSVSTPNIDRLASEGVRLTQHLAAASMCTPSRAAFLTGRYPIRSGMVSAYNLNRAFTWLGGSGGLPTNETTFAKLLQHRGYRTGLIGKWHLGLSCASRNDHCYHPLNHGFHYFYGVPFGLLSDCQASKTPELHRWLRIKLWISTVALALVPFLLLIPKFARWFSVPWKVIFVFALLAFLFFTSWYSSYGFTRRWNCILMRNHEIIQQPMKEEKVASLMLKEALAFIERYKREPFLLFFSFLHVHTPLISKKKFVGRSKYGRYGDNVEEMDWMVGKILDALDQERLANHTLVYFTSDNGGHLEPLDGAVQLGGWNGIYKGGKGMGGWEGGIRVPGIFRWPSVLEAGRVINEPTSLMDIYPTLSYIGGGILSQDRVIDGQNLMPLLEGRASHSDHEFLFHYCGVYLHTVRWHQKDCATVWKAHYVTPKFYPEGTGACYGSGICSCSGDVTYHDPPLLFDISRDPSEALPLNPDNEPLFDSVIKKMEAAIREHRRTLTPVPQQFSVFNTIWKPWLQPCCGTFPFCGCDKEDDILPMAP.

The Ca(2+) site is built by D15, D16, and C55. The Nucleophile role is filled by C55. C55 is modified (3-oxoalanine (Cys)). K115 is a binding site for substrate. The active site involves H117. 2 helical membrane-spanning segments follow: residues 167–187 and 189–209; these read LWIS…PKFA and WFSV…LFFT. Position 271 (H271) interacts with substrate. Ca(2+) contacts are provided by D323 and N324. K348 contacts substrate.

This sequence belongs to the sulfatase family. It depends on Ca(2+) as a cofactor. The conversion to 3-oxoalanine (also known as C-formylglycine, FGly), of a serine or cysteine residue in prokaryotes and of a cysteine residue in eukaryotes, is critical for catalytic activity.

It is found in the membrane. The sequence is that of Arylsulfatase H (ARSH) from Homo sapiens (Human).